Reading from the N-terminus, the 416-residue chain is Serine hydroxymethyltransferase (416 aa).

Residues Leu-117 and 121–123 (GHL) each bind (6S)-5,6,7,8-tetrahydrofolate. The residue at position 226 (Lys-226) is an N6-(pyridoxal phosphate)lysine.

This sequence belongs to the SHMT family. In terms of assembly, homodimer. Requires pyridoxal 5'-phosphate as cofactor.

It is found in the cytoplasm. The catalysed reaction is (6R)-5,10-methylene-5,6,7,8-tetrahydrofolate + glycine + H2O = (6S)-5,6,7,8-tetrahydrofolate + L-serine. It participates in one-carbon metabolism; tetrahydrofolate interconversion. Its pathway is amino-acid biosynthesis; glycine biosynthesis; glycine from L-serine: step 1/1. Catalyzes the reversible interconversion of serine and glycine with tetrahydrofolate (THF) serving as the one-carbon carrier. This reaction serves as the major source of one-carbon groups required for the biosynthesis of purines, thymidylate, methionine, and other important biomolecules. Also exhibits THF-independent aldolase activity toward beta-hydroxyamino acids, producing glycine and aldehydes, via a retro-aldol mechanism. The chain is Serine hydroxymethyltransferase from Leptospira biflexa serovar Patoc (strain Patoc 1 / Ames).